We begin with the raw amino-acid sequence, 235 residues long: Small ribosomal subunit protein eS4 (235 aa).

Residues 37–100 (LPLGIIIRDI…NETYRMFQDE (64 aa)) enclose the S4 RNA-binding domain.

It belongs to the eukaryotic ribosomal protein eS4 family.

This is Small ribosomal subunit protein eS4 from Methanosarcina barkeri (strain Fusaro / DSM 804).